The chain runs to 444 residues: CCA-adding enzyme (444 aa).

2 residues coordinate ATP: Ser57 and Arg60. Ser57 and Arg60 together coordinate CTP. 3 residues coordinate Mg(2+): Asp69, Asp71, and Asp124. ATP-binding residues include His147, Lys168, and Tyr177. Positions 147, 168, and 177 each coordinate CTP.

It belongs to the tRNA nucleotidyltransferase/poly(A) polymerase family. Archaeal CCA-adding enzyme subfamily. In terms of assembly, homodimer. Mg(2+) serves as cofactor.

It carries out the reaction a tRNA precursor + 2 CTP + ATP = a tRNA with a 3' CCA end + 3 diphosphate. The catalysed reaction is a tRNA with a 3' CCA end + 2 CTP + ATP = a tRNA with a 3' CCACCA end + 3 diphosphate. Catalyzes the addition and repair of the essential 3'-terminal CCA sequence in tRNAs without using a nucleic acid template. Adds these three nucleotides in the order of C, C, and A to the tRNA nucleotide-73, using CTP and ATP as substrates and producing inorganic pyrophosphate. tRNA 3'-terminal CCA addition is required both for tRNA processing and repair. Also involved in tRNA surveillance by mediating tandem CCA addition to generate a CCACCA at the 3' terminus of unstable tRNAs. While stable tRNAs receive only 3'-terminal CCA, unstable tRNAs are marked with CCACCA and rapidly degraded. This is CCA-adding enzyme from Methanococcus maripaludis (strain C7 / ATCC BAA-1331).